A 200-amino-acid polypeptide reads, in one-letter code: Recombination protein RecR (200 aa).

A C4-type zinc finger spans residues 57-72 (CSQCRTFTEQETCAIC). Residues 81–176 (GLLCVVEMPA…KVSRIAHGIP (96 aa)) enclose the Toprim domain.

The protein belongs to the RecR family.

Functionally, may play a role in DNA repair. It seems to be involved in an RecBC-independent recombinational process of DNA repair. It may act with RecF and RecO. This chain is Recombination protein RecR, found in Actinobacillus succinogenes (strain ATCC 55618 / DSM 22257 / CCUG 43843 / 130Z).